The chain runs to 432 residues: Putative O-antigen transporter (432 aa).

A run of 12 helical transmembrane segments spans residues 14-34, 47-67, 90-110, 134-154, 164-184, 189-209, 234-254, 271-291, 305-325, 334-354, 376-396, and 400-420; these read IIAA…LVSV, AVFT…IGIG, AAVH…FFLS, FIAS…KILF, IINA…HYLM, ITFA…IYIS, GFLI…IVMS, IFGL…PVCA, IIFL…LFIY, IIAN…LAVY, ILWL…WYFA, and GIVG…FWGL.

Its subcellular location is the cell inner membrane. It participates in bacterial outer membrane biogenesis; LPS O-antigen biosynthesis. In terms of biological role, may be involved in the translocation process of the nascent O-polysaccharide molecules and/or its ligation to lipid A core units. This Salmonella typhi protein is Putative O-antigen transporter (rfbX).